A 285-amino-acid chain; its full sequence is Orotidine 5'-phosphate decarboxylase (285 aa).

Residues Asp-40, Lys-62–His-64, Asp-93–Thr-102, Tyr-235, and Arg-253 contribute to the substrate site. Lys-95 functions as the Proton donor in the catalytic mechanism.

Belongs to the OMP decarboxylase family.

The enzyme catalyses orotidine 5'-phosphate + H(+) = UMP + CO2. It participates in pyrimidine metabolism; UMP biosynthesis via de novo pathway; UMP from orotate: step 2/2. The chain is Orotidine 5'-phosphate decarboxylase (URA3) from Paracoccidioides brasiliensis.